The following is a 390-amino-acid chain: Methylthioribose-1-phosphate isomerase (390 aa).

Catalysis depends on Asp263, which acts as the Proton donor.

Belongs to the eIF-2B alpha/beta/delta subunits family. MtnA subfamily.

Its subcellular location is the cytoplasm. The protein resides in the nucleus. The catalysed reaction is 5-(methylsulfanyl)-alpha-D-ribose 1-phosphate = 5-(methylsulfanyl)-D-ribulose 1-phosphate. Its pathway is amino-acid biosynthesis; L-methionine biosynthesis via salvage pathway; L-methionine from S-methyl-5-thio-alpha-D-ribose 1-phosphate: step 1/6. Its function is as follows. Catalyzes the interconversion of methylthioribose-1-phosphate (MTR-1-P) into methylthioribulose-1-phosphate (MTRu-1-P). The protein is Methylthioribose-1-phosphate isomerase of Meyerozyma guilliermondii (strain ATCC 6260 / CBS 566 / DSM 6381 / JCM 1539 / NBRC 10279 / NRRL Y-324) (Yeast).